We begin with the raw amino-acid sequence, 230 residues long: MEQRITVAIDGPAAAGKSTVAKMIANQLGFIYVDTGAMYRALTYQALQEGIDPKNEDSVLTILMNSNIELRQAENGQRVFVNNKDVSEEIRYPDVTSKVSFVAEHPSIRKEMVSRQQKLANNRSVVMDGRDIGTHVLPDAEVKIFLIASVEERAKRRHEENIKKGIPSDIKLLKKEISDRDEIDSNREVSPLIKAEDAIEVDTTSLSIAEVKDQILNEIFKYNTQNNKGV.

Residue 11–19 (GPAAAGKST) participates in ATP binding.

The protein belongs to the cytidylate kinase family. Type 1 subfamily.

It localises to the cytoplasm. It carries out the reaction CMP + ATP = CDP + ADP. The catalysed reaction is dCMP + ATP = dCDP + ADP. The polypeptide is Cytidylate kinase (Oceanobacillus iheyensis (strain DSM 14371 / CIP 107618 / JCM 11309 / KCTC 3954 / HTE831)).